Reading from the N-terminus, the 415-residue chain is Fructose-like permease IIC component 1 (415 aa).

Residues 1 to 46 (MAIKKRSATVVPGASGAAAAVKNPQASKTSFWGELPQHVMSGISRM) are Cytoplasmic-facing. The PTS EIIC type-2 domain occupies 35 to 410 (LPQHVMSGIS…RLMMFRKGKL (376 aa)). Residues 47 to 67 (VPTLIMGGVILAFSQLIAYSW) traverse the membrane as a helical segment. Topologically, residues 68–101 (LKIPAEIGIMDALNSGKFSGFDLSLLKFAWLSQS) are periplasmic. A helical transmembrane segment spans residues 102–122 (FGGVLFGFAIPMFAAFVANSI). The Cytoplasmic portion of the chain corresponds to 123-126 (GGKL). Residues 127 to 147 (AFPAGFIGGLMSTQPTQLLNF) traverse the membrane as a helical segment. The Periplasmic segment spans residues 148 to 157 (DPSTMQWATS). The helical transmembrane segment at 158–178 (SPVPSTFIGALIISIVAGYLV) threads the bilayer. Residues 179 to 197 (KWMNQKIQLPDFLLAFKTT) are Cytoplasmic-facing. Residues 198-218 (FLLPILSAIFVMLAMYYVITP) traverse the membrane as a helical segment. Residues 219–237 (FGGWINGGIRTVLTAAGEK) are Periplasmic-facing. The chain crosses the membrane as a helical span at residues 238 to 258 (GALMYAMGIAAATAIDLGGPI). The Cytoplasmic portion of the chain corresponds to 259–276 (NKAAGFVAFSFTTDHVLP). A helical transmembrane segment spans residues 277-297 (VTARSIAIVIPPIGLGLATII). Over 298–318 (DRRLTGKRLFNAQLYPQGKTA) the chain is Periplasmic. Residues 319 to 339 (MFLAFMGISEGAIPFALESPI) form a helical membrane-spanning segment. Residues 340–341 (TA) are Cytoplasmic-facing. The helical transmembrane segment at 342 to 362 (IPSYMVGAIVGSTAAVWLGAV) threads the bilayer. At 363–378 (QWFPESAIWAWPLVTN) the chain is on the periplasmic side. Residues 379–399 (LGVYMAGIALGAVITALMVVF) traverse the membrane as a helical segment. The Cytoplasmic segment spans residues 400 to 415 (LRLMMFRKGKLLIDSL).

The protein resides in the cell inner membrane. In terms of biological role, the phosphoenolpyruvate-dependent sugar phosphotransferase system (PTS), a major carbohydrate active -transport system, catalyzes the phosphorylation of incoming sugar substrates concomitant with their translocation across the cell membrane. The chain is Fructose-like permease IIC component 1 (fryC) from Escherichia coli (strain K12).